A 1075-amino-acid chain; its full sequence is Disheveled-associated activator of morphogenesis 2 (1075 aa).

In terms of domain architecture, GBD/FH3 spans valine 40–aspartate 416. Residues asparagine 437–glycine 517 adopt a coiled-coil conformation. Disordered regions lie at residues glycine 517–proline 611, lysine 1006–glutamate 1025, and serine 1048–tyrosine 1075. Over residues proline 523–glycine 532 the composition is skewed to pro residues. Over residues proline 533 to leucine 544 the composition is skewed to low complexity. Residues proline 550 to proline 581 are compositionally biased toward pro residues. One can recognise an FH2 domain in the interval lysine 605–tyrosine 1075. The DAD domain maps to glutamate 1025–tyrosine 1075. Over residues threonine 1064–tyrosine 1075 the composition is skewed to basic and acidic residues.

Belongs to the formin homology family. As to expression, expressed in progenitor populations of the embryonic spinal cord (at protein level).

In terms of biological role, key regulator of the Wnt signaling pathway, which is required for various processes during development, such as dorsal patterning, determination of left/right symmetry or myelination in the central nervous system. Acts downstream of Wnt ligands and upstream of beta-catenin (CTNNB1). Required for canonical Wnt signaling pathway during patterning in the dorsal spinal cord by promoting the aggregation of Disheveled (Dvl) complexes, thereby clustering and formation of Wnt receptor signalosomes and potentiating Wnt activity. During dorsal patterning of the spinal cord, inhibits oligodendrocytes differentiation via interaction with PIP5K1A. Also regulates non-canonical Wnt signaling pathway. Acts downstream of PITX2 in the developing gut and is required for left/right asymmetry within dorsal mesentery: affects mesenchymal condensation by lengthening cadherin-based junctions through WNT5A and non-canonical Wnt signaling, inducing polarized condensation in the left dorsal mesentery necessary to initiate gut rotation. Together with DAAM1, required for myocardial maturation and sarcomere assembly. This Gallus gallus (Chicken) protein is Disheveled-associated activator of morphogenesis 2.